We begin with the raw amino-acid sequence, 466 residues long: Ribulose bisphosphate carboxylase large chain (466 aa).

Lys-4 is subject to N6,N6,N6-trimethyllysine. The substrate site is built by Asn-113 and Thr-163. Lys-165 acts as the Proton acceptor in catalysis. Lys-167 provides a ligand contact to substrate. Lys-191, Asp-193, and Glu-194 together coordinate Mg(2+). An N6-carboxylysine modification is found at Lys-191. Residue His-284 is the Proton acceptor of the active site. Substrate is bound by residues Arg-285, His-317, and Ser-369.

Belongs to the RuBisCO large chain family. Type I subfamily. In terms of assembly, heterohexadecamer of 8 large chains and 8 small chains; disulfide-linked. The disulfide link is formed within the large subunit homodimers. The cofactor is Mg(2+). Post-translationally, the disulfide bond which can form in the large chain dimeric partners within the hexadecamer appears to be associated with oxidative stress and protein turnover.

The protein resides in the plastid. The protein localises to the chloroplast. The catalysed reaction is 2 (2R)-3-phosphoglycerate + 2 H(+) = D-ribulose 1,5-bisphosphate + CO2 + H2O. The enzyme catalyses D-ribulose 1,5-bisphosphate + O2 = 2-phosphoglycolate + (2R)-3-phosphoglycerate + 2 H(+). RuBisCO catalyzes two reactions: the carboxylation of D-ribulose 1,5-bisphosphate, the primary event in carbon dioxide fixation, as well as the oxidative fragmentation of the pentose substrate in the photorespiration process. Both reactions occur simultaneously and in competition at the same active site. This chain is Ribulose bisphosphate carboxylase large chain, found in Ruttya fruticosa (African azalea).